We begin with the raw amino-acid sequence, 157 residues long: Small ribosomal subunit protein uS7 (157 aa).

Belongs to the universal ribosomal protein uS7 family. As to quaternary structure, part of the 30S ribosomal subunit. Contacts proteins S9 and S11.

In terms of biological role, one of the primary rRNA binding proteins, it binds directly to 16S rRNA where it nucleates assembly of the head domain of the 30S subunit. Is located at the subunit interface close to the decoding center, probably blocks exit of the E-site tRNA. The chain is Small ribosomal subunit protein uS7 from Koribacter versatilis (strain Ellin345).